Consider the following 275-residue polypeptide: Elongation factor Ts (275 aa).

Positions 80–83 (TDFV) are involved in Mg(2+) ion dislocation from EF-Tu.

It belongs to the EF-Ts family.

The protein resides in the cytoplasm. Its function is as follows. Associates with the EF-Tu.GDP complex and induces the exchange of GDP to GTP. It remains bound to the aminoacyl-tRNA.EF-Tu.GTP complex up to the GTP hydrolysis stage on the ribosome. This Kineococcus radiotolerans (strain ATCC BAA-149 / DSM 14245 / SRS30216) protein is Elongation factor Ts.